Here is a 552-residue protein sequence, read N- to C-terminus: MTKFVFVTGGVVSSLGKGIASASLAAILESRGLKVTLIKLDPYINVDPGTMSPFQHGEVFVTDDGAETDLDLGHYERFIETRMKQANNFTTGRIYQSVLEKERRGDYLGKTVQVIPHVTNEIQEFIKRGAGIGTPDAVDVAICEVGGTVGDIESLPFLEAVRQLSLKLGPNNSAFVHLTYLPWIAAAGELKTKPTQHTVQKLREIGIQPDALLCRALHAVPEEEKEKISLFTNVAEWGVISMWDVDTIYKVPRMLHEQGLDGLICDKLRLNTPPANLKRWDDLVYETEHPRGEVQIAMVGKYVELSDAYKSVNEALKHAGMQSHVRVKITHVDSETISDDNAAQQLAQYDAILVPGGFGSRGVEGKISTARYAREHQVPYLGICLGMQVATIEYARHVAGLQGANSTEFDPATPHPVIALITEWKDEDGTIKTRSENSDLGGTMRLGAQSSDVQPGTLAHSIYGDVVTERHRHRYEANVQYLDRLRSAGLVISALTQREHLTEIVELPQSVHPWFIGVQFHPEFKSTPWSGHPLFNAFIKAAVEHQKPAAKA.

The tract at residues 1 to 270 (MTKFVFVTGG…DGLICDKLRL (270 aa)) is amidoligase domain. Position 13 (Ser-13) interacts with CTP. Ser-13 contributes to the UTP binding site. Residues 14 to 19 (SLGKGI) and Asp-71 contribute to the ATP site. Mg(2+)-binding residues include Asp-71 and Glu-144. CTP is bound by residues 151-153 (DIE), 191-196 (KTKPTQ), and Lys-227. UTP is bound by residues 191-196 (KTKPTQ) and Lys-227. Positions 295 to 548 (QIAMVGKYVE…IKAAVEHQKP (254 aa)) constitute a Glutamine amidotransferase type-1 domain. An L-glutamine-binding site is contributed by Gly-357. Catalysis depends on Cys-384, which acts as the Nucleophile; for glutamine hydrolysis. L-glutamine contacts are provided by residues 385-388 (LGMQ) and Glu-408. Residues 432–451 (KTRSENSDLGGTMRLGAQSS) form a disordered region. Residue Arg-474 participates in L-glutamine binding. Residues His-521 and Glu-523 contribute to the active site.

This sequence belongs to the CTP synthase family. Homotetramer.

It catalyses the reaction UTP + L-glutamine + ATP + H2O = CTP + L-glutamate + ADP + phosphate + 2 H(+). The catalysed reaction is L-glutamine + H2O = L-glutamate + NH4(+). The enzyme catalyses UTP + NH4(+) + ATP = CTP + ADP + phosphate + 2 H(+). It participates in pyrimidine metabolism; CTP biosynthesis via de novo pathway; CTP from UDP: step 2/2. With respect to regulation, allosterically activated by GTP, when glutamine is the substrate; GTP has no effect on the reaction when ammonia is the substrate. The allosteric effector GTP functions by stabilizing the protein conformation that binds the tetrahedral intermediate(s) formed during glutamine hydrolysis. Inhibited by the product CTP, via allosteric rather than competitive inhibition. In terms of biological role, catalyzes the ATP-dependent amination of UTP to CTP with either L-glutamine or ammonia as the source of nitrogen. Regulates intracellular CTP levels through interactions with the four ribonucleotide triphosphates. In Acidovorax sp. (strain JS42), this protein is CTP synthase.